A 263-amino-acid chain; its full sequence is Ribosomal RNA small subunit methyltransferase J (263 aa).

S-adenosyl-L-methionine is bound by residues 115-116, 131-132, and Asp-181; these read RD and ER.

Belongs to the methyltransferase superfamily. RsmJ family.

It is found in the cytoplasm. It catalyses the reaction guanosine(1516) in 16S rRNA + S-adenosyl-L-methionine = N(2)-methylguanosine(1516) in 16S rRNA + S-adenosyl-L-homocysteine + H(+). Functionally, specifically methylates the guanosine in position 1516 of 16S rRNA. The polypeptide is Ribosomal RNA small subunit methyltransferase J (Hahella chejuensis (strain KCTC 2396)).